The sequence spans 302 residues: Protoheme IX farnesyltransferase 2 (302 aa).

9 consecutive transmembrane segments (helical) span residues 14–34, 36–56, 85–105, 108–128, 133–153, 163–183, 209–229, 230–250, and 264–284; these read IIFG…QGSV, WWLL…GCAI, AALA…WFCT, LATG…SLYM, VYGT…GYCA, AILL…IAIF, IVLY…GGYA, GYGY…MALS, and QVFF…AVDG.

It belongs to the UbiA prenyltransferase family. Protoheme IX farnesyltransferase subfamily.

The protein localises to the cell inner membrane. The enzyme catalyses heme b + (2E,6E)-farnesyl diphosphate + H2O = Fe(II)-heme o + diphosphate. It functions in the pathway porphyrin-containing compound metabolism; heme O biosynthesis; heme O from protoheme: step 1/1. Converts heme B (protoheme IX) to heme O by substitution of the vinyl group on carbon 2 of heme B porphyrin ring with a hydroxyethyl farnesyl side group. The protein is Protoheme IX farnesyltransferase 2 of Chromobacterium violaceum (strain ATCC 12472 / DSM 30191 / JCM 1249 / CCUG 213 / NBRC 12614 / NCIMB 9131 / NCTC 9757 / MK).